The primary structure comprises 273 residues: uncharacterized protein (273 aa).

Positions Thr29–Leu131 constitute an AB hydrolase-1 domain. Catalysis depends on residues Ser102 and His254.

It belongs to the DmpD/TodF/XylF esterase family.

This is an uncharacterized protein from Bacillus subtilis (strain 168).